The following is a 32-amino-acid chain: Ovostatin (32 aa).

The isoglutamyl cysteine thioester (Cys-Gln) cross-link spans 27–30 (CGEQ).

Belongs to the protease inhibitor I39 (alpha-2-macroglobulin) family. In terms of assembly, homotetramer, which consists of two pairs of disulfide-linked chains.

It is found in the secreted. In terms of biological role, is able to inhibit all four classes of proteinases by a unique 'trapping' mechanism. This protein has a peptide stretch, called the 'bait region' which contains specific cleavage sites for different proteinases. When a proteinase cleaves the bait region, a conformational change is induced in the protein which traps the proteinase. The entrapped enzyme remains active against low molecular weight substrates (activity against high molecular weight substrates is greatly reduced). Following cleavage in the bait region a thioester bond is hydrolyzed and mediates the covalent binding of the protein to the proteinase. This is Ovostatin from Anas platyrhynchos (Mallard).